The chain runs to 1379 residues: DNA-directed RNA polymerase subunit beta'' (1379 aa).

Zn(2+) is bound by residues cysteine 220, cysteine 291, cysteine 298, and cysteine 301.

The protein belongs to the RNA polymerase beta' chain family. RpoC2 subfamily. In terms of assembly, in plastids the minimal PEP RNA polymerase catalytic core is composed of four subunits: alpha, beta, beta', and beta''. When a (nuclear-encoded) sigma factor is associated with the core the holoenzyme is formed, which can initiate transcription. Requires Zn(2+) as cofactor.

The protein localises to the plastid. The catalysed reaction is RNA(n) + a ribonucleoside 5'-triphosphate = RNA(n+1) + diphosphate. Functionally, DNA-dependent RNA polymerase catalyzes the transcription of DNA into RNA using the four ribonucleoside triphosphates as substrates. The chain is DNA-directed RNA polymerase subunit beta'' from Cuscuta reflexa (Southern Asian dodder).